A 103-amino-acid chain; its full sequence is NADH-quinone oxidoreductase subunit K (103 aa).

3 helical membrane passes run 7-27 (TEHGLYLAAALFILGLIGVLV), 31-51 (LIFMLLSLEIMLNATGLAFIV), and 65-85 (FMLILTLAAAEAAVALALILL).

It belongs to the complex I subunit 4L family. NDH-1 is composed of 14 different subunits. Subunits NuoA, H, J, K, L, M, N constitute the membrane sector of the complex.

The protein localises to the cell inner membrane. The catalysed reaction is a quinone + NADH + 5 H(+)(in) = a quinol + NAD(+) + 4 H(+)(out). Its function is as follows. NDH-1 shuttles electrons from NADH, via FMN and iron-sulfur (Fe-S) centers, to quinones in the respiratory chain. The immediate electron acceptor for the enzyme in this species is believed to be ubiquinone. Couples the redox reaction to proton translocation (for every two electrons transferred, four hydrogen ions are translocated across the cytoplasmic membrane), and thus conserves the redox energy in a proton gradient. The protein is NADH-quinone oxidoreductase subunit K of Nitrosococcus oceani (strain ATCC 19707 / BCRC 17464 / JCM 30415 / NCIMB 11848 / C-107).